The chain runs to 308 residues: KH domain-containing protein At4g26480 (308 aa).

Residues 1–26 (MMMMTSLGGGAGGGGGGGGSGGGRFV) form a disordered region. Residues 7–24 (LGGGAGGGGGGGGSGGGR) are compositionally biased toward gly residues. Residues 165 to 232 (DIPVDKYPNY…EHLNEPLHIL (68 aa)) form the KH domain. The segment at 284–308 (EEGSPMSGSISPYNSLGMKRAKTRG) is disordered. Ser294 carries the phosphoserine modification.

The protein resides in the nucleus. In Arabidopsis thaliana (Mouse-ear cress), this protein is KH domain-containing protein At4g26480.